A 118-amino-acid polypeptide reads, in one-letter code: Large ribosomal subunit protein bL19 (118 aa).

Belongs to the bacterial ribosomal protein bL19 family.

Its function is as follows. This protein is located at the 30S-50S ribosomal subunit interface and may play a role in the structure and function of the aminoacyl-tRNA binding site. The polypeptide is Large ribosomal subunit protein bL19 (Campylobacter concisus (strain 13826)).